The primary structure comprises 273 residues: MLSGAYLRVLNERPGQAVLWSLGCQRGSASSTEGNRCVEAAEACTADEQCQQLRSEYVAQCLGRAGWRGPGSCVRSRCRRALRRFFARGPPALTHALLFCGCEGPACAERRRQTFAPACAFSGPQLAPPSCLKPLDRCERSRRCRPRLFAFQASCAPAPGSRDGCPEEGGPRCLRAYAGLVGTVVTPNYLDNVSARVAPWCGCEASGNRREECEAFRKLFTRNPCLDGAIQAFDSSQPSVLQDQWNPYQNAGCCFLWVSSMSILTALALQALL.

Residue Asn192 is glycosylated (N-linked (GlcNAc...) asparagine). Asn250 is lipidated: GPI-anchor amidated asparagine. The propeptide at 251 to 273 is removed in mature form; sequence AGCCFLWVSSMSILTALALQALL.

This sequence belongs to the GDNFR family. Interacts with ARTN ligand and RET: forms a 2:2:2 ternary complex composed of ARTN ligand, GFRA3 and RET receptor. Interacts with SORL1. Weakly expressed in heart, brain and testis.

It localises to the cell membrane. The protein localises to the secreted. In terms of biological role, receptor for persephin (PSPN), a growth factor that exhibits neurotrophic activity on mesencephalic dopaminergic and motor neurons. Acts by binding to its coreceptor, GFRA4, leading to autophosphorylation and activation of the RET receptor. May be important in C-cell development and, in the postnatal development of the adrenal medulla. The protein is GDNF family receptor alpha-4 (Gfra4) of Rattus norvegicus (Rat).